The primary structure comprises 226 residues: Ribonuclease 3 (226 aa).

The RNase III domain occupies 6–128 (INRLQRKLGY…LIGGVFLDSD (123 aa)). Glu-41 is a Mg(2+) binding site. The active site involves Asp-45. Positions 114 and 117 each coordinate Mg(2+). Glu-117 is an active-site residue. The DRBM domain maps to 155–225 (DPKTRLQEYL…AEQALKQLEL (71 aa)).

It belongs to the ribonuclease III family. Homodimer. The cofactor is Mg(2+).

It localises to the cytoplasm. It carries out the reaction Endonucleolytic cleavage to 5'-phosphomonoester.. Its function is as follows. Digests double-stranded RNA. Involved in the processing of primary rRNA transcript to yield the immediate precursors to the large and small rRNAs (23S and 16S). Processes some mRNAs, and tRNAs when they are encoded in the rRNA operon. Processes pre-crRNA and tracrRNA of type II CRISPR loci if present in the organism. This is Ribonuclease 3 from Yersinia pseudotuberculosis serotype O:1b (strain IP 31758).